We begin with the raw amino-acid sequence, 237 residues long: Neural retina-specific leucine zipper protein (237 aa).

Glycyl lysine isopeptide (Lys-Gly) (interchain with G-Cter in SUMO) cross-links involve residues Lys20 and Lys24. The segment at 23 to 57 (VKREPSEGRPGPPTASLGSTPYSSVPPSPTFSEPG) is disordered. Residues 30–93 (GRPGPPTASL…AGEALGLSPE (64 aa)) are minimal transactivation domain (MTD). Positions 159-185 (RLKQRRRTLKNRGYAQACRSKRLQQRR) are basic motif. The region spanning 159-222 (RLKQRRRTLK…DLYKARCDRL (64 aa)) is the bZIP domain. The segment at 187–208 (LEAERARLAAQLDALRAEVARL) is leucine-zipper.

This sequence belongs to the bZIP family. As to quaternary structure, interacts with FIZ1; this interaction represses transactivation. Interacts (via the leucine-zipper domain) with CRX. Phosphorylated. In terms of processing, disumoylated at Lys-20. Sumoylation modulates the transcriptional activity of NRL on RHO and NR2E3 promoters, and is required for normal rod differentiation. In terms of tissue distribution, expressed in the brain and the retina. Expressed strongly in rod and cone cells (at protein level).

Its subcellular location is the cytoplasm. The protein resides in the nucleus. Functionally, acts as a transcriptional activator which regulates the expression of several rod-specific genes, including RHO and PDE6B. Also functions as a transcriptional coactivator, stimulating transcription mediated by the transcription factor CRX and NR2E3. Binds to the rhodopsin promoter in a sequence-specific manner. The polypeptide is Neural retina-specific leucine zipper protein (NRL) (Homo sapiens (Human)).